The sequence spans 62 residues: Small ribosomal subunit protein eS17 (62 aa).

It belongs to the eukaryotic ribosomal protein eS17 family.

This Methanocaldococcus jannaschii (strain ATCC 43067 / DSM 2661 / JAL-1 / JCM 10045 / NBRC 100440) (Methanococcus jannaschii) protein is Small ribosomal subunit protein eS17.